The primary structure comprises 421 residues: Core protease I7 homolog (421 aa).

Residues His242, Asp249, and Cys329 contribute to the active site.

This sequence belongs to the peptidase C57 family.

The protein localises to the virion. Functionally, late protein responsible for processing most or all of the viral core and membrane proteins known to undergo morphogenesis-associated proteolysis. These proteolytic events are involved in the transformation of immature virions (IV) into mature virions (MV). The chain is Core protease I7 homolog from Fowlpox virus (strain NVSL) (FPV).